Here is a 121-residue protein sequence, read N- to C-terminus: Ribonuclease P protein component (121 aa).

Belongs to the RnpA family. Consists of a catalytic RNA component (M1 or rnpB) and a protein subunit.

The catalysed reaction is Endonucleolytic cleavage of RNA, removing 5'-extranucleotides from tRNA precursor.. Its function is as follows. RNaseP catalyzes the removal of the 5'-leader sequence from pre-tRNA to produce the mature 5'-terminus. It can also cleave other RNA substrates such as 4.5S RNA. The protein component plays an auxiliary but essential role in vivo by binding to the 5'-leader sequence and broadening the substrate specificity of the ribozyme. This is Ribonuclease P protein component from Alcanivorax borkumensis (strain ATCC 700651 / DSM 11573 / NCIMB 13689 / SK2).